A 1341-amino-acid chain; its full sequence is WASH complex subunit 2A (1341 aa).

A sufficient for interaction with WASHC3, WASHC4 and WASHC5; required for interaction with WASHC1 region spans residues 1–220; the sequence is MMNRTTPDQE…VGSDRGSIVD (220 aa). The span at 202–214 shows a compositional bias: low complexity; the sequence is GELSSEEGSVGSD. Residues 202–405 form a disordered region; that stretch reads GELSSEEGSV…SSSKPGKKIP (204 aa). Residues 220–232 show a composition bias toward acidic residues; that stretch reads DTEEEKEEEESDE. A compositionally biased stretch (basic and acidic residues) spans 233–244; the sequence is DFAHHSDNEQNR. 2 stretches are compositionally biased toward acidic residues: residues 250-259 and 266-276; these read SDEEEDDDGC and EKEEEDIEDIE. The segment covering 293–307 has biased composition (basic and acidic residues); the sequence is LAARIKGDAVGRVDE. The span at 355–366 shows a compositional bias: gly residues; sequence GSGGGLFSGGKG. Residues 356–600 form a sufficient for interaction with CCDC93 region; sequence SGGGLFSGGK…QTLCLQAQRE (245 aa). The segment at 356 to 742 is required for interaction with CCDC22 and VPS35L; it reads SGGGLFSGGK…KEAQLGVKSV (387 aa). The tract at residues 357 to 1341 is interaction with VPS35; sequence GGGLFSGGKG…DDPLNAFGGQ (985 aa). 4 short sequence motifs (LFa) span residues 367-378, 411-419, 450-463, and 482-491; these read LFDDEDEESDLF, VFLGDTDVF, LFDD…DDFF, and IFGDEEGDLF. The tract at residues 422–554 is disordered; it reads ASVPSMKEPQ…EDLFSSQSAS (133 aa). Acidic residues predominate over residues 451–462; it reads FDDDDGDDDDDF. Over residues 507-517 the composition is skewed to basic and acidic residues; sequence DENKARAEKKV. Residues 518-536 show a composition bias toward polar residues; sequence TLSSSKNLKPSSETKTQKG. 3 short sequence motifs (LFa) span residues 537 to 548, 572 to 583, and 617 to 629; these read LFSDEEDSEDLF, LFDDEDEEDNLF, and LFSS…WNIP. At serine 539 the chain carries Phosphoserine. 3 disordered regions span residues 621 to 664, 696 to 739, and 751 to 838; these read DEED…KTSL, DSGG…QLGV, and ESLK…KSTG. Residues 637-647 are compositionally biased toward basic and acidic residues; the sequence is SDSRSKGEPRD. Short sequence motifs (LFa) lie at residues 664–674, 690–702, and 726–738; these read LFEEDEEDDLF, LFED…GSLF, and LFSD…AQLG. A compositionally biased stretch (basic and acidic residues) spans 751–768; that stretch reads ESLKFGRTDVAESEKEGL. The short motif at 803-817 is the LFa 11 element; sequence LFDEEEDKMEDQNII. A compositionally biased stretch (basic and acidic residues) spans 823 to 834; the sequence is EVGKGRDPDAHP. Short sequence motifs (LFa) lie at residues 839 to 847, 856 to 862, and 878 to 888; these read VFQDEELLF, DPDVDLF, and LFGDDEDDDLF. Disordered stretches follow at residues 881–951 and 988–1205; these read DDED…KEPS and FPSS…LEDE. Basic and acidic residues-rich tracts occupy residues 898-911 and 917-931; these read QEKK…HSVD and KHPE…KGIW. The interval 937 to 1341 is interaction with phospholipids; that stretch reads QDSSGLAPFK…DDPLNAFGGQ (405 aa). A compositionally biased stretch (basic residues) spans 1028 to 1046; sequence NKSRVKMRGKRRPQTRAAR. The interval 1029-1047 is required for interaction with F-actin-capping protein subunit alpha (CAPZA1 or CAPZA2 or CAPZA3); it reads KSRVKMRGKRRPQTRAARR. 2 positions are modified to phosphoserine: serine 1054 and serine 1087. The segment covering 1094 to 1110 has biased composition (low complexity); it reads EALAAAAAPWEGGPVPG. A Phosphoserine modification is found at serine 1114. Short sequence motifs (LFa) lie at residues 1129–1136, 1171–1185, 1201–1209, 1234–1240, 1262–1270, and 1290–1299; these read LFDSGDIF, MFPA…DDLF, LLEDEDDLF, IFEDDIF, LFDDNIDIF, and IFDDDMDDIF. Residues 1135-1145 are compositionally biased toward polar residues; it reads IFSTGTGSQSV. Residues 1302–1326 are disordered; the sequence is GIQAKTTKPKSRSAQAAPEPRFEHK. The LFa 21 signature appears at 1330–1338; the sequence is IFDDPLNAF.

The protein belongs to the FAM21 family. As to quaternary structure, component of the WASH core complex also described as WASH regulatory complex (SHRC) composed of WASH (WASHC1, WASH2P or WASH3P), WASHC2 (WASHC2A or WASHC2C), WASHC3, WASHC4 and WASHC5; in the complex interacts (via N-terminus) directly with WASHC1. The WASH core complex associates with the F-actin-capping protein dimer (formed by CAPZA1, CAPZA2 or CAPZA3 and CAPZB) in a transient or substoichiometric manner which was initially described as WASH complex. Interacts with VPS35; mediates the association with the retromer CSC complex. Interacts with FKBP15. Interacts with CCDC93, CCDC22, VPS35L; indicative for an association of the WASH core complex with the CCC and retriever complexes. Directly interacts with TBC1D23.

The protein localises to the early endosome membrane. It localises to the cell membrane. Acts at least in part as component of the WASH core complex whose assembly at the surface of endosomes inhibits WASH nucleation-promoting factor (NPF) activity in recruiting and activating the Arp2/3 complex to induce actin polymerization and is involved in the fission of tubules that serve as transport intermediates during endosome sorting. Mediates the recruitment of the WASH core complex to endosome membranes via binding to phospholipids and VPS35 of the retromer CSC. Mediates the recruitment of the F-actin-capping protein dimer to the WASH core complex probably promoting localized F-actin polymerization needed for vesicle scission. Via its C-terminus binds various phospholipids, most strongly phosphatidylinositol 4-phosphate (PtdIns-(4)P), phosphatidylinositol 5-phosphate (PtdIns-(5)P) and phosphatidylinositol 3,5-bisphosphate (PtdIns-(3,5)P2). Involved in the endosome-to-plasma membrane trafficking and recycling of SNX27-retromer-dependent cargo proteins, such as GLUT1. Required for the association of DNAJC13, ENTR1, ANKRD50 with retromer CSC subunit VPS35. Required for the endosomal recruitment of CCC complex subunits COMMD1 and CCDC93 as well as the retriever complex subunit VPS35L. The sequence is that of WASH complex subunit 2A from Homo sapiens (Human).